The following is a 197-amino-acid chain: Imidazoleglycerol-phosphate dehydratase (197 aa).

It belongs to the imidazoleglycerol-phosphate dehydratase family.

It is found in the cytoplasm. The catalysed reaction is D-erythro-1-(imidazol-4-yl)glycerol 3-phosphate = 3-(imidazol-4-yl)-2-oxopropyl phosphate + H2O. It functions in the pathway amino-acid biosynthesis; L-histidine biosynthesis; L-histidine from 5-phospho-alpha-D-ribose 1-diphosphate: step 6/9. The chain is Imidazoleglycerol-phosphate dehydratase from Erythrobacter litoralis (strain HTCC2594).